Reading from the N-terminus, the 264-residue chain is Tryptophan synthase alpha chain (264 aa).

Active-site proton acceptor residues include Glu49 and Asp60.

The protein belongs to the TrpA family. As to quaternary structure, tetramer of two alpha and two beta chains.

The catalysed reaction is (1S,2R)-1-C-(indol-3-yl)glycerol 3-phosphate + L-serine = D-glyceraldehyde 3-phosphate + L-tryptophan + H2O. Its pathway is amino-acid biosynthesis; L-tryptophan biosynthesis; L-tryptophan from chorismate: step 5/5. In terms of biological role, the alpha subunit is responsible for the aldol cleavage of indoleglycerol phosphate to indole and glyceraldehyde 3-phosphate. The chain is Tryptophan synthase alpha chain from Lachnospira eligens (strain ATCC 27750 / DSM 3376 / VPI C15-48 / C15-B4) (Eubacterium eligens).